Consider the following 407-residue polypeptide: Phosphopentomutase (407 aa).

Mn(2+)-binding residues include Asp-11, Asp-305, His-310, Asp-346, His-347, and His-358.

The protein belongs to the phosphopentomutase family. Requires Mn(2+) as cofactor.

Its subcellular location is the cytoplasm. The enzyme catalyses 2-deoxy-alpha-D-ribose 1-phosphate = 2-deoxy-D-ribose 5-phosphate. It carries out the reaction alpha-D-ribose 1-phosphate = D-ribose 5-phosphate. It participates in carbohydrate degradation; 2-deoxy-D-ribose 1-phosphate degradation; D-glyceraldehyde 3-phosphate and acetaldehyde from 2-deoxy-alpha-D-ribose 1-phosphate: step 1/2. Its function is as follows. Isomerase that catalyzes the conversion of deoxy-ribose 1-phosphate (dRib-1-P) and ribose 1-phosphate (Rib-1-P) to deoxy-ribose 5-phosphate (dRib-5-P) and ribose 5-phosphate (Rib-5-P), respectively. In Legionella pneumophila (strain Lens), this protein is Phosphopentomutase.